The chain runs to 238 residues: B-box zinc finger protein 25 (238 aa).

Residues Cys5, Cys8, Cys28, His33, Cys57, Cys60, Cys80, and His85 each coordinate Zn(2+). The B box-type 1; atypical zinc finger occupies 5-47 (CDVCEKAPATLICCADEAALCAKCDVEVHAANKLASKHQRLFL). The B box-type 2; atypical zinc finger occupies 57 to 99 (CDICLEKAAFIFCVEDRALLCRDCDEATHAPNTRSANHQRFLA). The tract at residues 115 to 139 (VEKNHFDPSNQQSLSKPPTQQPAAP) is disordered. Polar residues predominate over residues 121-137 (DPSNQQSLSKPPTQQPA). The interval 226-238 (DDEEEHFLVPDLG) is interaction with COP1.

In terms of assembly, interacts with COP1 WD40 domain. Interacts with HY5 and HYH. Post-translationally, COP1-mediated ubiquitination and subsequent proteasomal degradation of BBX25/STH occurs in the dark.

It localises to the nucleus. Acts as a negative regulator of seedling photomorphogenesis. BBX25/STH and BBX24/STO function as transcriptional corepressors of HY5 activity, leading to the down-regulation of BBX22 expression. BBX25/STH acts additively with BBX24/STO during de-etiolation and the hypocotyl shade avoidance response. This is B-box zinc finger protein 25 from Arabidopsis thaliana (Mouse-ear cress).